A 324-amino-acid chain; its full sequence is Acetyl-coenzyme A carboxylase carboxyl transferase subunit beta (324 aa).

The CoA carboxyltransferase N-terminal domain maps to 28–297 (LWCKCPSCNA…AVAPAAAKAP (270 aa)). Residues Cys-32, Cys-35, Cys-51, and Cys-54 each coordinate Zn(2+). The C4-type zinc finger occupies 32-54 (CPSCNAILYKSEVERNLEVCPKC).

It belongs to the AccD/PCCB family. Acetyl-CoA carboxylase is a heterohexamer composed of biotin carboxyl carrier protein (AccB), biotin carboxylase (AccC) and two subunits each of ACCase subunit alpha (AccA) and ACCase subunit beta (AccD). It depends on Zn(2+) as a cofactor.

The protein localises to the cytoplasm. It catalyses the reaction N(6)-carboxybiotinyl-L-lysyl-[protein] + acetyl-CoA = N(6)-biotinyl-L-lysyl-[protein] + malonyl-CoA. It functions in the pathway lipid metabolism; malonyl-CoA biosynthesis; malonyl-CoA from acetyl-CoA: step 1/1. Its function is as follows. Component of the acetyl coenzyme A carboxylase (ACC) complex. Biotin carboxylase (BC) catalyzes the carboxylation of biotin on its carrier protein (BCCP) and then the CO(2) group is transferred by the transcarboxylase to acetyl-CoA to form malonyl-CoA. The sequence is that of Acetyl-coenzyme A carboxylase carboxyl transferase subunit beta from Methylococcus capsulatus (strain ATCC 33009 / NCIMB 11132 / Bath).